The chain runs to 201 residues: FMN-dependent NADH:quinone oxidoreductase (201 aa).

FMN is bound by residues serine 10, 16–18 (SQS), 96–99 (MYNF), and 140–143 (SRGG).

The protein belongs to the azoreductase type 1 family. Homodimer. Requires FMN as cofactor.

The enzyme catalyses 2 a quinone + NADH + H(+) = 2 a 1,4-benzosemiquinone + NAD(+). It carries out the reaction N,N-dimethyl-1,4-phenylenediamine + anthranilate + 2 NAD(+) = 2-(4-dimethylaminophenyl)diazenylbenzoate + 2 NADH + 2 H(+). Quinone reductase that provides resistance to thiol-specific stress caused by electrophilic quinones. Its function is as follows. Also exhibits azoreductase activity. Catalyzes the reductive cleavage of the azo bond in aromatic azo compounds to the corresponding amines. This is FMN-dependent NADH:quinone oxidoreductase from Shigella boydii serotype 4 (strain Sb227).